The sequence spans 332 residues: MGKGGREKISSNEEEREGVMATDFFWSYTDEPHASRRRQILSCYPQIRQLFGPDPWAFLKITLVVILQLSTAAILHNSGWLKILSIAYFFGSFLNHNLFLAIHELSHNLAFSTPVYNRCLGIFANLPIGVPMSVTFQKYHLEHHRFQGVDGIDMDVPTYTEAHLVTNIFAKTIWVFLQLFFYALRPIFIKPKPPGYWEFINFLIQIVLDVSVVLFFGWRSFAYLILSTFVGGGMHPMAGHFISEHYVFNPNQETYSYYGPLNLLTWSVGYHNEHHDFPRIPGNKLHLVKEIAGEYYEGLESYKSWSQVIYMYIMDTTVGPYSRMKRKLSKSD.

The next 3 helical transmembrane spans lie at proline 55–leucine 75, isoleucine 83–histidine 103, and cysteine 119–tyrosine 139. The Histidine box-1 signature appears at histidine 103–histidine 107. The short motif at histidine 140–histidine 144 is the Histidine box-2 element. 3 helical membrane-spanning segments follow: residues leucine 164–leucine 184, tryptophan 197–glycine 217, and alanine 222–isoleucine 242. Residues histidine 271 to histidine 275 carry the Histidine box-3 motif.

The protein belongs to the fatty acid desaturase type 1 family. DEGS subfamily. Specifically expressed in flowers.

It localises to the endoplasmic reticulum membrane. The catalysed reaction is an N-acylsphinganine + 2 Fe(II)-[cytochrome b5] + O2 + 2 H(+) = an N-acylsphing-4-enine + 2 Fe(III)-[cytochrome b5] + 2 H2O. Functionally, sphingolipid-delta-4-desaturase required for the biosynthesis of delta-4-unsaturated sphingolipids and derivatives. May be required for the biosynthesis of glucosylceramides. This Arabidopsis thaliana (Mouse-ear cress) protein is Sphingolipid delta(4)-desaturase DES1-like.